Here is a 420-residue protein sequence, read N- to C-terminus: Tryptophan--tRNA ligase (420 aa).

Positions 72 to 80 match the 'HIGH' region motif; that stretch reads PSGLPHFGH. Positions 308 to 312 match the 'KMSKS' region motif; sequence KMSSS.

The protein belongs to the class-I aminoacyl-tRNA synthetase family.

Its subcellular location is the cytoplasm. The enzyme catalyses tRNA(Trp) + L-tryptophan + ATP = L-tryptophyl-tRNA(Trp) + AMP + diphosphate + H(+). The protein is Tryptophan--tRNA ligase of Archaeoglobus fulgidus (strain ATCC 49558 / DSM 4304 / JCM 9628 / NBRC 100126 / VC-16).